Reading from the N-terminus, the 176-residue chain is Japanin-like-RS (176 aa).

Residues 1–24 form the signal peptide; sequence MKVLLCLVCSFYIIVSSITTMTTG. Cystine bridges form between cysteine 52–cysteine 174 and cysteine 138–cysteine 162. N-linked (GlcNAc...) asparagine glycosylation is present at asparagine 155.

Belongs to the calycin superfamily. Lipocalin family. As to quaternary structure, homodimer; non-disulfide-linked. Each monomer accommodates one molecule of cholesterol in a pocket. As to expression, expressed in salivary glands.

It is found in the secreted. Functionally, salivary tick protein that modulates host immune response. This protein blocks dendritic cell (DC) differentiation from monocytes. In addition, it inhibits up-regulation of costimulatory molecules and pro-inflammatory cytokines in response to stimuli and promotes up-regulation of co-inhibitory molecules and the anti-inflammatory cytokine interleukin-10. It has a pocket to accomodate cholesterol, which may have immune-modulatory roles, either directly or through interactions with the host gut microbiota. The sequence is that of Japanin-like-RS from Rhipicephalus sanguineus (Brown dog tick).